The following is a 190-amino-acid chain: Lipid A acyltransferase PagP (190 aa).

The N-terminal stretch at 1–29 (MYVAMIIRKYFLIIALLVMPWLAIPSVSA) is a signal peptide. Catalysis depends on residues His-62, Asp-105, and Ser-106.

Belongs to the lipid A palmitoyltransferase family. As to quaternary structure, homodimer.

The protein resides in the cell outer membrane. It catalyses the reaction a lipid A + a 1,2-diacyl-sn-glycero-3-phosphocholine = a hepta-acyl lipid A + a 2-acyl-sn-glycero-3-phosphocholine. It carries out the reaction a lipid IVA + a 1,2-diacyl-sn-glycero-3-phosphocholine = a lipid IVB + a 2-acyl-sn-glycero-3-phosphocholine. The enzyme catalyses a lipid IIA + a 1,2-diacyl-sn-glycero-3-phosphocholine = a lipid IIB + a 2-acyl-sn-glycero-3-phosphocholine. Its function is as follows. Transfers a fatty acid residue from the sn-1 position of a phospholipid to the N-linked hydroxyfatty acid chain on the proximal unit of lipid A or its precursors. This is Lipid A acyltransferase PagP from Salmonella typhi.